The chain runs to 315 residues: uncharacterized protein (315 aa).

Transmembrane regions (helical) follow at residues 18-38, 202-222, and 244-264; these read IWFI…IISG, ILAI…LAGI, and LIYA…VIVL. Positions 288–315 are disordered; it reads VCSTGNRSSGSTDQDISTTKQQSQEAVA.

It is found in the membrane. This is an uncharacterized protein from Saccharomyces cerevisiae (strain ATCC 204508 / S288c) (Baker's yeast).